The primary structure comprises 125 residues: Barwin (125 aa).

Q1 is modified (pyrrolidone carboxylic acid). The Barwin domain maps to 1-125; sequence QQANDVRATY…VNYQFVDCRD (125 aa). Intrachain disulfides connect C31/C63, C52/C86, and C66/C123.

May be involved in a defense mechanism. Probable plant lectin. Binds weakly a chitin analog. The polypeptide is Barwin (Hordeum vulgare (Barley)).